The following is a 49-amino-acid chain: uncharacterized protein (49 aa).

This is an uncharacterized protein from Archaeoglobus fulgidus (strain ATCC 49558 / DSM 4304 / JCM 9628 / NBRC 100126 / VC-16).